A 422-amino-acid polypeptide reads, in one-letter code: Dihydroorotase (422 aa).

Residues histidine 59 and histidine 61 each contribute to the Zn(2+) site. Residues 61-63 and asparagine 93 each bind substrate; that span reads HFR. Residues aspartate 150, histidine 177, and histidine 230 each contribute to the Zn(2+) site. Residue asparagine 276 participates in substrate binding. Aspartate 303 lines the Zn(2+) pocket. The active site involves aspartate 303. Histidine 307 contacts substrate.

It belongs to the metallo-dependent hydrolases superfamily. DHOase family. Class I DHOase subfamily. Zn(2+) serves as cofactor.

It catalyses the reaction (S)-dihydroorotate + H2O = N-carbamoyl-L-aspartate + H(+). It participates in pyrimidine metabolism; UMP biosynthesis via de novo pathway; (S)-dihydroorotate from bicarbonate: step 3/3. In terms of biological role, catalyzes the reversible cyclization of carbamoyl aspartate to dihydroorotate. The sequence is that of Dihydroorotase from Streptococcus thermophilus (strain CNRZ 1066).